The following is a 379-amino-acid chain: Lipid-A-disaccharide synthase (379 aa).

Belongs to the LpxB family.

The enzyme catalyses a lipid X + a UDP-2-N,3-O-bis[(3R)-3-hydroxyacyl]-alpha-D-glucosamine = a lipid A disaccharide + UDP + H(+). The protein operates within bacterial outer membrane biogenesis; LPS lipid A biosynthesis. Its function is as follows. Condensation of UDP-2,3-diacylglucosamine and 2,3-diacylglucosamine-1-phosphate to form lipid A disaccharide, a precursor of lipid A, a phosphorylated glycolipid that anchors the lipopolysaccharide to the outer membrane of the cell. The sequence is that of Lipid-A-disaccharide synthase from Vibrio campbellii (strain ATCC BAA-1116).